We begin with the raw amino-acid sequence, 358 residues long: 3-dehydroquinate synthase (358 aa).

NAD(+)-binding positions include 70–75 (DGEQYK), 104–108 (GVIGD), 128–129 (TT), lysine 141, lysine 150, and 168–171 (CLHT). Glutamate 183, histidine 246, and histidine 263 together coordinate Zn(2+).

Belongs to the sugar phosphate cyclases superfamily. Dehydroquinate synthase family. The cofactor is Co(2+). Zn(2+) serves as cofactor. It depends on NAD(+) as a cofactor.

The protein localises to the cytoplasm. It carries out the reaction 7-phospho-2-dehydro-3-deoxy-D-arabino-heptonate = 3-dehydroquinate + phosphate. The protein operates within metabolic intermediate biosynthesis; chorismate biosynthesis; chorismate from D-erythrose 4-phosphate and phosphoenolpyruvate: step 2/7. Functionally, catalyzes the conversion of 3-deoxy-D-arabino-heptulosonate 7-phosphate (DAHP) to dehydroquinate (DHQ). This is 3-dehydroquinate synthase from Shewanella loihica (strain ATCC BAA-1088 / PV-4).